The sequence spans 1077 residues: Error-prone DNA polymerase (1077 aa).

This sequence belongs to the DNA polymerase type-C family. DnaE2 subfamily.

It localises to the cytoplasm. The enzyme catalyses DNA(n) + a 2'-deoxyribonucleoside 5'-triphosphate = DNA(n+1) + diphosphate. Functionally, DNA polymerase involved in damage-induced mutagenesis and translesion synthesis (TLS). It is not the major replicative DNA polymerase. The polypeptide is Error-prone DNA polymerase (Brucella melitensis biotype 1 (strain ATCC 23456 / CCUG 17765 / NCTC 10094 / 16M)).